The primary structure comprises 913 residues: Glutamate receptor ionotropic, kainate 2 (913 aa).

Over 1–566 (MCAGTMKIIS…VFSFLNPLSP (566 aa)) the chain is Extracellular. 7 N-linked (GlcNAc...) asparagine glycosylation sites follow: asparagine 72, asparagine 78, asparagine 280, asparagine 383, asparagine 417, asparagine 428, and asparagine 435. Cysteine 101 and cysteine 352 are disulfide-bonded. Positions 521, 523, and 528 each coordinate L-glutamate. A glycan (N-linked (GlcNAc...) asparagine) is linked at asparagine 551. Residues 567 to 587 (DIWMYILLAYLGVSCVLFVIA) form a helical membrane-spanning segment. Residues 588–643 (RFSPYEWYNPHPCNPDSDVVENNFTLLNSFWFGVGALMQQGSELMPKALSTRIVGG) lie on the Cytoplasmic side of the membrane. Residues 644–664 (IWWFFTLIIISSYTANLAAFL) traverse the membrane as a helical segment. The Extracellular portion of the chain corresponds to 665-824 (TVERMESPID…KEASALGVQN (160 aa)). L-glutamate is bound by residues alanine 694, threonine 695, and glutamate 743. Cysteines 755 and 809 form a disulfide. Asparagine 756 carries an N-linked (GlcNAc...) asparagine glycan. Residues 825–845 (IGGIFIVLAAGLVLSVFVAVG) form a helical membrane-spanning segment. Residues 846–913 (EFLYKSKKNA…RRLPGKETMA (68 aa)) lie on the Cytoplasmic side of the membrane.

It belongs to the glutamate-gated ion channel (TC 1.A.10.1) family. GRIK2 subfamily. Homotetramer and heterotetramer with GRIK5. Tetramers may be formed by the dimerization of dimers.

It is found in the cell membrane. The protein resides in the postsynaptic cell membrane. It catalyses the reaction Ca(2+)(in) = Ca(2+)(out). The enzyme catalyses Na(+)(in) = Na(+)(out). Cold receptor activity activated by temperatures between 10-19 degrees Celsius. Its function is as follows. Ionotropic glutamate receptor that functions as a cation-permeable ligand-gated ion channel, gated by L-glutamate and the glutamatergic agonist kainic acid. L-glutamate acts as an excitatory neurotransmitter at many synapses in the central nervous system. Binding of the excitatory neurotransmitter L-glutamate induces a conformation change, leading to the opening of the cation channel, and thereby converts the chemical signal to an electrical impulse. The receptor then desensitizes rapidly and enters a transient inactive state, characterized by the presence of bound agonist. In terms of biological role, independent of its ionotropic glutamate receptor activity, acts as a thermoreceptor conferring sensitivity to cold temperatures. Functions in dorsal root ganglion neurons. The protein is Glutamate receptor ionotropic, kainate 2 (grik2) of Xenopus laevis (African clawed frog).